The following is a 276-amino-acid chain: Ribosomal RNA small subunit methyltransferase A (276 aa).

The S-adenosyl-L-methionine site is built by histidine 15, leucine 17, glycine 42, glutamate 64, aspartate 89, and asparagine 108.

Belongs to the class I-like SAM-binding methyltransferase superfamily. rRNA adenine N(6)-methyltransferase family. RsmA subfamily.

The protein resides in the cytoplasm. The enzyme catalyses adenosine(1518)/adenosine(1519) in 16S rRNA + 4 S-adenosyl-L-methionine = N(6)-dimethyladenosine(1518)/N(6)-dimethyladenosine(1519) in 16S rRNA + 4 S-adenosyl-L-homocysteine + 4 H(+). Its function is as follows. Specifically dimethylates two adjacent adenosines (A1518 and A1519) in the loop of a conserved hairpin near the 3'-end of 16S rRNA in the 30S particle. May play a critical role in biogenesis of 30S subunits. The sequence is that of Ribosomal RNA small subunit methyltransferase A from Prochlorococcus marinus (strain MIT 9312).